Consider the following 222-residue polypeptide: Protein-L-isoaspartate O-methyltransferase (222 aa).

Ser-69 is an active-site residue.

It belongs to the methyltransferase superfamily. L-isoaspartyl/D-aspartyl protein methyltransferase family.

The protein resides in the cytoplasm. The catalysed reaction is [protein]-L-isoaspartate + S-adenosyl-L-methionine = [protein]-L-isoaspartate alpha-methyl ester + S-adenosyl-L-homocysteine. Its function is as follows. Catalyzes the methyl esterification of L-isoaspartyl residues in peptides and proteins that result from spontaneous decomposition of normal L-aspartyl and L-asparaginyl residues. It plays a role in the repair and/or degradation of damaged proteins. The chain is Protein-L-isoaspartate O-methyltransferase from Caulobacter vibrioides (strain NA1000 / CB15N) (Caulobacter crescentus).